A 356-amino-acid polypeptide reads, in one-letter code: Probable cinnamyl alcohol dehydrogenase (356 aa).

Zn(2+) is bound at residue Cys47. Ser49 lines the NADP(+) pocket. Positions 69, 70, 100, 103, 106, 114, and 163 each coordinate Zn(2+). Residues Thr167, Gly188–Gly193, Ser211–Lys216, Thr251, Gly275, and Ser298–Ile300 contribute to the NADP(+) site.

Belongs to the zinc-containing alcohol dehydrogenase family. Homodimer. The cofactor is Zn(2+).

It catalyses the reaction (E)-cinnamyl alcohol + NADP(+) = (E)-cinnamaldehyde + NADPH + H(+). The enzyme catalyses (E)-coniferol + NADP(+) = (E)-coniferaldehyde + NADPH + H(+). It carries out the reaction (E)-sinapyl alcohol + NADP(+) = (E)-sinapaldehyde + NADPH + H(+). The catalysed reaction is (E)-4-coumaroyl alcohol + NADP(+) = (E)-4-coumaraldehyde + NADPH + H(+). It catalyses the reaction (E)-caffeyl alcohol + NADP(+) = (E)-caffeyl aldehyde + NADPH + H(+). The protein operates within aromatic compound metabolism; phenylpropanoid biosynthesis. Its function is as follows. Involved in lignin biosynthesis. Catalyzes the final step specific for the production of lignin monomers. Catalyzes the NADPH-dependent reduction of coniferaldehyde, 5-hydroxyconiferaldehyde, sinapaldehyde, 4-coumaraldehyde and caffeyl aldehyde to their respective alcohols. This is Probable cinnamyl alcohol dehydrogenase (CAD) from Eucalyptus globulus (Tasmanian blue gum).